The following is a 101-amino-acid chain: ATP synthase subunit c (101 aa).

2 helical membrane-spanning segments follow: residues 28–48 (SVVA…VGMG) and 72–92 (MFIA…IALI).

The protein belongs to the ATPase C chain family. As to quaternary structure, F-type ATPases have 2 components, F(1) - the catalytic core - and F(0) - the membrane proton channel. F(1) has five subunits: alpha(3), beta(3), gamma(1), delta(1), epsilon(1). F(0) has three main subunits: a(1), b(2) and c(10-14). The alpha and beta chains form an alternating ring which encloses part of the gamma chain. F(1) is attached to F(0) by a central stalk formed by the gamma and epsilon chains, while a peripheral stalk is formed by the delta and b chains.

Its subcellular location is the cell inner membrane. Its function is as follows. F(1)F(0) ATP synthase produces ATP from ADP in the presence of a proton or sodium gradient. F-type ATPases consist of two structural domains, F(1) containing the extramembraneous catalytic core and F(0) containing the membrane proton channel, linked together by a central stalk and a peripheral stalk. During catalysis, ATP synthesis in the catalytic domain of F(1) is coupled via a rotary mechanism of the central stalk subunits to proton translocation. In terms of biological role, key component of the F(0) channel; it plays a direct role in translocation across the membrane. A homomeric c-ring of between 10-14 subunits forms the central stalk rotor element with the F(1) delta and epsilon subunits. This is ATP synthase subunit c from Sulfurovum sp. (strain NBC37-1).